Consider the following 79-residue polypeptide: Sulfur carrier protein TusA (79 aa).

Catalysis depends on Cys-17, which acts as the Cysteine persulfide intermediate.

Belongs to the sulfur carrier protein TusA family.

Its subcellular location is the cytoplasm. Sulfur carrier protein which probably makes part of a sulfur-relay system. The sequence is that of Sulfur carrier protein TusA from Haemophilus influenzae (strain 86-028NP).